Reading from the N-terminus, the 860-residue chain is Protein argonaute-3 (860 aa).

The PAZ domain occupies 230–349; sequence PVIQFMCEVL…LPLEVCNIVA (120 aa). Residues 518–819 form the Piwi domain; the sequence is LIIVILPGKT…VAFRARYHLV (302 aa). Residues 530-567 form an interaction with guide RNA region; it reads YAEVKRAGDTLLGMATQCVQVKNVIKTSPQTLSNLCLK. Residues Asp598, Glu638, and Asp670 each coordinate a divalent metal cation. Positions 758 to 805 are interaction with guide RNA; it reads QGTSRPSHYHVLWDDNCFTADELQLLTYQLCHTYVRCTRSVSIPAPAY. His808 lines the a divalent metal cation pocket.

The protein belongs to the argonaute family. Ago subfamily.

Its subcellular location is the cytoplasm. It localises to the P-body. It carries out the reaction Endonucleolytic cleavage to 5'-phosphomonoester.. Required for RNA-mediated gene silencing (RNAi). Binds to short RNAs such as microRNAs (miRNAs) and represses the translation of mRNAs which are complementary to them. Possesses RNA slicer activity but only on select RNAs bearing 5'- and 3'-flanking sequences to the region of guide-target complementarity. This Gallus gallus (Chicken) protein is Protein argonaute-3 (AGO3).